Here is a 114-residue protein sequence, read N- to C-terminus: Non-specific lipid-transfer protein 1 (114 aa).

An N-terminal signal peptide occupies residues 1 to 23 (MEMVSKIACFVLLCMVVVAPHAE). Disulfide bonds link cysteine 27–cysteine 73, cysteine 37–cysteine 50, cysteine 51–cysteine 96, and cysteine 71–cysteine 110.

This sequence belongs to the plant LTP family.

Its function is as follows. Plant non-specific lipid-transfer proteins transfer phospholipids as well as galactolipids across membranes. May play a role in wax or cutin deposition in the cell walls of expanding epidermal cells and certain secretory tissues. This Solanum pennellii (Tomato) protein is Non-specific lipid-transfer protein 1 (LTP1).